We begin with the raw amino-acid sequence, 265 residues long: 4-hydroxy-tetrahydrodipicolinate reductase (265 aa).

NAD(+) contacts are provided by residues 7-12 (GASGRM), aspartate 33, 96-98 (GTT), and 120-123 (AANF). Residue histidine 153 is the Proton donor/acceptor of the active site. Residue histidine 154 participates in (S)-2,3,4,5-tetrahydrodipicolinate binding. The active-site Proton donor is the lysine 157. Residue 163 to 164 (GT) coordinates (S)-2,3,4,5-tetrahydrodipicolinate.

It belongs to the DapB family.

It localises to the cytoplasm. The catalysed reaction is (S)-2,3,4,5-tetrahydrodipicolinate + NAD(+) + H2O = (2S,4S)-4-hydroxy-2,3,4,5-tetrahydrodipicolinate + NADH + H(+). The enzyme catalyses (S)-2,3,4,5-tetrahydrodipicolinate + NADP(+) + H2O = (2S,4S)-4-hydroxy-2,3,4,5-tetrahydrodipicolinate + NADPH + H(+). Its pathway is amino-acid biosynthesis; L-lysine biosynthesis via DAP pathway; (S)-tetrahydrodipicolinate from L-aspartate: step 4/4. In terms of biological role, catalyzes the conversion of 4-hydroxy-tetrahydrodipicolinate (HTPA) to tetrahydrodipicolinate. The protein is 4-hydroxy-tetrahydrodipicolinate reductase of Cupriavidus necator (strain ATCC 17699 / DSM 428 / KCTC 22496 / NCIMB 10442 / H16 / Stanier 337) (Ralstonia eutropha).